We begin with the raw amino-acid sequence, 263 residues long: 3-deoxy-manno-octulosonate cytidylyltransferase 2 (263 aa).

The protein belongs to the KdsB family.

The protein resides in the cytoplasm. It catalyses the reaction 3-deoxy-alpha-D-manno-oct-2-ulosonate + CTP = CMP-3-deoxy-beta-D-manno-octulosonate + diphosphate. Its pathway is nucleotide-sugar biosynthesis; CMP-3-deoxy-D-manno-octulosonate biosynthesis; CMP-3-deoxy-D-manno-octulosonate from 3-deoxy-D-manno-octulosonate and CTP: step 1/1. The protein operates within bacterial outer membrane biogenesis; lipopolysaccharide biosynthesis. Functionally, activates KDO (a required 8-carbon sugar) for incorporation into bacterial lipopolysaccharide in Gram-negative bacteria. The sequence is that of 3-deoxy-manno-octulosonate cytidylyltransferase 2 from Paraburkholderia phytofirmans (strain DSM 17436 / LMG 22146 / PsJN) (Burkholderia phytofirmans).